Reading from the N-terminus, the 554-residue chain is MATCLFLLGLFLLLPRPVPAPCYTATRSECKQKHKFVPGVWMAGEGMDVTTLRRSGSFPVNTQRFLRPDRTCTLCKNSLMRDATQRLPVAITHWRPHSSHCQRNVAAAKVHSTEGVAREAAANINNDWRVGLDVNPRPEANMRASVAGSHSKVANFAAEKTYQDQYNFNSDTVECRMYSFRLVQKPPLHLDFKKALRALPRNFNSSTEHAYHRLISSYGTHFITAVDLGGRISVLTALRTCQLTLNGLTADEVGDCLNVEAQVSIGAQASVSSEYKACEEKKKQHKMATSFHQTYRERHVEVLGGPLDSTHDLLFGNQATPEQFSTWTASLPSNPGLVDYSLEPLHTLLEEQNPKREALRQAISHYIMSRARWQNCSRPCRSGQHKSSHDSCQCECQDSKVTNQDCCPRQRGLAHLVVSNFRAEHLWGDYTTATDAYLKVFFGGQEFRTGVVWNNNNPRWTDKMDFENVLLSTGGPLRVQVWDADYGWDDDLLGSCDRSPHSGFHEVTCELNHGRVKFSYHAKCLPHLTGGTCLEYAPQGLLGDPPGNRSGAVW.

A signal peptide spans 1-20 (MATCLFLLGLFLLLPRPVPA). 3 cysteine pairs are disulfide-bonded: C22–C75, C30–C72, and C101–C175. In terms of domain architecture, MACPF spans 26–374 (TRSECKQKHK…HYIMSRARWQ (349 aa)). The chain crosses the membrane as a beta stranded span at residues 128–148 (WRVGLDVNPRPEANMRASVAG). N-linked (GlcNAc...) asparagine glycosylation occurs at N204. 4 disulfides stabilise this stretch: C241–C407, C376–C392, C380–C394, and C396–C406. A beta stranded membrane pass occupies residues 256-278 (CLNVEAQVSIGAQASVSSEYKAC). N375 carries an N-linked (GlcNAc...) asparagine glycan. One can recognise an EGF-like domain in the interval 375 to 407 (NCSRPCRSGQHKSSHDSCQCECQDSKVTNQDCC). The 119-residue stretch at 395 to 513 (ECQDSKVTNQ…FHEVTCELNH (119 aa)) folds into the C2 domain. Residues G428, D429, T432, A433, D435, N454, E467, D483, A484, D485, W488, D489, D490, and D491 each coordinate Ca(2+). Cystine bridges form between C496/C509 and C524/C533. N548 carries an N-linked (GlcNAc...) asparagine glycan.

Belongs to the complement C6/C7/C8/C9 family. In terms of assembly, monomer, as soluble protein. Homooligomer; homooligomerizes to form a pore-forming ring. The cofactor is Ca(2+). In terms of processing, N-glycosylated. The glycosylation sites are facing the interior of the pore. Detected in cytotoxic T-lymphocytes and natural killer cells.

Its subcellular location is the cytolytic granule. It is found in the secreted. It localises to the cell membrane. The protein resides in the endosome lumen. Functionally, pore-forming protein that plays a key role in granzyme-mediated programmed cell death, and in defense against virus-infected or neoplastic cells. Can insert into the membrane of target cells in its calcium-bound form, oligomerize and form large pores. Promotes cytolysis and apoptosis of target cells by mediating the passage and uptake of cytotoxic granzymes. Facilitates the delivery of cationic cargo protein, while anionic or neural proteins are not delivered efficiently. Perforin pores allow the release of mature caspase-7 (CASP7) into the extracellular milieu. The chain is Perforin-1 (Prf1) from Mus musculus (Mouse).